Consider the following 128-residue polypeptide: Large ribosomal subunit protein bL12 (128 aa).

This sequence belongs to the bacterial ribosomal protein bL12 family. As to quaternary structure, homodimer. Part of the ribosomal stalk of the 50S ribosomal subunit. Forms a multimeric L10(L12)X complex, where L10 forms an elongated spine to which 2 to 4 L12 dimers bind in a sequential fashion. Binds GTP-bound translation factors.

In terms of biological role, forms part of the ribosomal stalk which helps the ribosome interact with GTP-bound translation factors. Is thus essential for accurate translation. In Sorangium cellulosum (strain So ce56) (Polyangium cellulosum (strain So ce56)), this protein is Large ribosomal subunit protein bL12.